The chain runs to 363 residues: UDP-N-acetylglucosamine--N-acetylmuramyl-(pentapeptide) pyrophosphoryl-undecaprenol N-acetylglucosamine transferase (363 aa).

UDP-N-acetyl-alpha-D-glucosamine contacts are provided by residues 12–14, N122, R164, S191, I245, and Q290; that span reads TGG.

It belongs to the glycosyltransferase 28 family. MurG subfamily.

The protein resides in the cell membrane. It catalyses the reaction di-trans,octa-cis-undecaprenyl diphospho-N-acetyl-alpha-D-muramoyl-L-alanyl-D-glutamyl-meso-2,6-diaminopimeloyl-D-alanyl-D-alanine + UDP-N-acetyl-alpha-D-glucosamine = di-trans,octa-cis-undecaprenyl diphospho-[N-acetyl-alpha-D-glucosaminyl-(1-&gt;4)]-N-acetyl-alpha-D-muramoyl-L-alanyl-D-glutamyl-meso-2,6-diaminopimeloyl-D-alanyl-D-alanine + UDP + H(+). It participates in cell wall biogenesis; peptidoglycan biosynthesis. Functionally, cell wall formation. Catalyzes the transfer of a GlcNAc subunit on undecaprenyl-pyrophosphoryl-MurNAc-pentapeptide (lipid intermediate I) to form undecaprenyl-pyrophosphoryl-MurNAc-(pentapeptide)GlcNAc (lipid intermediate II). The sequence is that of UDP-N-acetylglucosamine--N-acetylmuramyl-(pentapeptide) pyrophosphoryl-undecaprenol N-acetylglucosamine transferase from Lawsonia intracellularis (strain PHE/MN1-00).